Reading from the N-terminus, the 2069-residue chain is Dedicator of cytokinesis protein 9 (2069 aa).

Phosphoserine is present on residues Ser21, Ser32, Ser167, and Ser170. One can recognise a PH domain in the interval 174–281 (GITKHGWLYK…WITILNKILQ (108 aa)). A disordered region spans residues 290–313 (EKRNGDSHEDDEQSKLEGSGSGLD). 2 positions are modified to phosphoserine: Ser433 and Ser443. In terms of domain architecture, C2 DOCK-type spans 640–818 (TNHLYVYPKY…PLLKISTHLV (179 aa)). Ser927 and Ser1235 each carry phosphoserine. Thr1241 bears the Phosphothreonine mark. Residues 1241–1282 (TPNINSVRNADSRGSLISTDSGNSLPERNSEKSNSLDKHQQS) are disordered. Ser1255, Ser1261, and Ser1264 each carry phosphoserine. Residues 1255-1267 (SLISTDSGNSLPE) are compositionally biased toward polar residues. Residues 1268–1280 (RNSEKSNSLDKHQ) are compositionally biased toward basic and acidic residues. Residues 1605 to 2069 (KSYASTPELR…LSEIMHEQLG (465 aa)) enclose the DOCKER domain. The interval 1693 to 2069 (DEEASMMEDV…LSEIMHEQLG (377 aa)) is interaction with CDC42. 2 coiled-coil regions span residues 1948–1982 (IEVAIDEMSKKVAELRQLCSSAEVDMIKLQLKLQG) and 2034–2067 (NERLIKEDQLEYQEEMKANYREMAKELSEIMHEQ).

It belongs to the DOCK family. As to quaternary structure, homodimer. Interacts preferentially with nucleotide-depleted CDC42. Widely expressed, with highest expression in heart and placenta. Expressed at intermediate level in kidney, brain, lung and skeletal muscle.

It localises to the endomembrane system. Functionally, guanine nucleotide-exchange factor (GEF) that activates CDC42 by exchanging bound GDP for free GTP. Overexpression induces filopodia formation. The sequence is that of Dedicator of cytokinesis protein 9 from Homo sapiens (Human).